The following is a 514-amino-acid chain: Xylose import ATP-binding protein XylG (514 aa).

ABC transporter domains are found at residues 7–246 (FEMR…VGRE) and 263–508 (LEAR…IHAE). 39 to 46 (GENGAGKS) contributes to the ATP binding site.

It belongs to the ABC transporter superfamily. Xylose importer (TC 3.A.1.2.4) family. As to quaternary structure, the complex is composed of two ATP-binding proteins (XylG), two transmembrane proteins (XylH) and a solute-binding protein (XylF).

The protein resides in the cell inner membrane. The enzyme catalyses D-xylose(out) + ATP + H2O = D-xylose(in) + ADP + phosphate + H(+). In terms of biological role, part of the ABC transporter complex XylFGH involved in xylose import. Responsible for energy coupling to the transport system. The polypeptide is Xylose import ATP-binding protein XylG (Ralstonia nicotianae (strain ATCC BAA-1114 / GMI1000) (Ralstonia solanacearum)).